Reading from the N-terminus, the 382-residue chain is Lipid-A-disaccharide synthase (382 aa).

The protein belongs to the LpxB family.

It catalyses the reaction 2-N,3-O-bis[(3R)-3-hydroxytetradecanoyl]-alpha-D-glucosaminyl 1-phosphate + UDP-2-N,3-O-bis[(3R)-3-hydroxytetradecanoyl]-alpha-D-glucosamine = lipid A disaccharide (E. coli) + UDP + H(+). The catalysed reaction is a lipid X + a UDP-2-N,3-O-bis[(3R)-3-hydroxyacyl]-alpha-D-glucosamine = a lipid A disaccharide + UDP + H(+). It functions in the pathway glycolipid biosynthesis; lipid IV(A) biosynthesis; lipid IV(A) from (3R)-3-hydroxytetradecanoyl-[acyl-carrier-protein] and UDP-N-acetyl-alpha-D-glucosamine: step 5/6. Functionally, condensation of UDP-2,3-diacylglucosamine and 2,3-diacylglucosamine-1-phosphate to form lipid A disaccharide, a precursor of lipid A, a phosphorylated glycolipid that anchors the lipopolysaccharide to the outer membrane of the cell. This chain is Lipid-A-disaccharide synthase, found in Enterobacter sp. (strain 638).